The primary structure comprises 66 residues: Large ribosomal subunit protein bL35c (66 aa).

This sequence belongs to the bacterial ribosomal protein bL35 family.

It is found in the plastid. Its subcellular location is the chloroplast. In Gracilaria tenuistipitata var. liui (Red alga), this protein is Large ribosomal subunit protein bL35c.